A 439-amino-acid polypeptide reads, in one-letter code: Phthalate 4,5-dioxygenase oxygenase subunit (439 aa).

Positions 27–134 constitute a Rieske domain; it reads WTPVCLLEEV…TREWGGFVWA (108 aa). [2Fe-2S] cluster is bound by residues cysteine 70, histidine 72, cysteine 89, and histidine 92. Residues histidine 181 and histidine 186 each coordinate Fe cation.

Belongs to the bacterial ring-hydroxylating dioxygenase alpha subunit family. As to quaternary structure, this dioxygenase system consists of two proteins: phthalate oxygenase and phthalate oxygenase reductase. Requires [2Fe-2S] cluster as cofactor. Fe cation serves as cofactor.

The catalysed reaction is phthalate + NADH + O2 + H(+) = cis-4,5-dihydroxycyclohexa-2,6-diene-1,2-dicarboxylate + NAD(+). It participates in xenobiotic degradation; phthalate degradation; 3,4-dihydroxybenzoate from phthalate: step 1/3. The protein is Phthalate 4,5-dioxygenase oxygenase subunit (pht3) of Pseudomonas putida (Arthrobacter siderocapsulatus).